The chain runs to 377 residues: Histidinol-phosphate aminotransferase (377 aa).

Lys-232 carries the post-translational modification N6-(pyridoxal phosphate)lysine.

The protein belongs to the class-II pyridoxal-phosphate-dependent aminotransferase family. Histidinol-phosphate aminotransferase subfamily. Homodimer. Pyridoxal 5'-phosphate serves as cofactor.

It catalyses the reaction L-histidinol phosphate + 2-oxoglutarate = 3-(imidazol-4-yl)-2-oxopropyl phosphate + L-glutamate. It functions in the pathway amino-acid biosynthesis; L-histidine biosynthesis; L-histidine from 5-phospho-alpha-D-ribose 1-diphosphate: step 7/9. In Mycobacterium sp. (strain KMS), this protein is Histidinol-phosphate aminotransferase.